Reading from the N-terminus, the 52-residue chain is ATP synthase protein 8 (52 aa).

A helical membrane pass occupies residues 10-30 (FLMSLMIMMILIFMTINFYFF).

This sequence belongs to the ATPase protein 8 family. F-type ATPases have 2 components, CF(1) - the catalytic core - and CF(0) - the membrane proton channel.

It is found in the mitochondrion membrane. In terms of biological role, mitochondrial membrane ATP synthase (F(1)F(0) ATP synthase or Complex V) produces ATP from ADP in the presence of a proton gradient across the membrane which is generated by electron transport complexes of the respiratory chain. F-type ATPases consist of two structural domains, F(1) - containing the extramembraneous catalytic core and F(0) - containing the membrane proton channel, linked together by a central stalk and a peripheral stalk. During catalysis, ATP synthesis in the catalytic domain of F(1) is coupled via a rotary mechanism of the central stalk subunits to proton translocation. Part of the complex F(0) domain. Minor subunit located with subunit a in the membrane. The chain is ATP synthase protein 8 (MT-ATP8) from Rhipicephalus sanguineus (Brown dog tick).